The chain runs to 78 residues: Surfactant-associated protein 2 (78 aa).

Positions methionine 1 to glycine 19 are cleaved as a signal peptide. An N-linked (GlcNAc...) asparagine glycan is attached at asparagine 37.

In terms of processing, N-glycosylated.

It localises to the secreted. The protein localises to the cytoplasmic vesicle. Its subcellular location is the secretory vesicle. It is found in the golgi apparatus. Putative surfactant protein. The polypeptide is Surfactant-associated protein 2 (SFTA2) (Bos taurus (Bovine)).